The chain runs to 967 residues: Phosphoenolpyruvate carboxylase (967 aa).

The residue at position 11 (Ser11) is a Phosphoserine. Active-site residues include His172 and Lys601.

Belongs to the PEPCase type 1 family. In terms of assembly, homotetramer. Mg(2+) is required as a cofactor.

It is found in the cytoplasm. It catalyses the reaction oxaloacetate + phosphate = phosphoenolpyruvate + hydrogencarbonate. Its pathway is photosynthesis; C3 acid pathway. By light-reversible phosphorylation. Through the carboxylation of phosphoenolpyruvate (PEP) it forms oxaloacetate, a four-carbon dicarboxylic acid source for the tricarboxylic acid cycle. In Flaveria pringlei, this protein is Phosphoenolpyruvate carboxylase (PPCA1).